The primary structure comprises 259 residues: Type III pantothenate kinase (259 aa).

Residue 9–16 (DAGNSRIK) participates in ATP binding. Substrate is bound by residues Y93 and 100–103 (GSDR). D102 (proton acceptor) is an active-site residue. T126 serves as a coordination point for ATP. A substrate-binding site is contributed by T190.

This sequence belongs to the type III pantothenate kinase family. In terms of assembly, homodimer. Requires NH4(+) as cofactor. K(+) serves as cofactor.

It localises to the cytoplasm. The catalysed reaction is (R)-pantothenate + ATP = (R)-4'-phosphopantothenate + ADP + H(+). The protein operates within cofactor biosynthesis; coenzyme A biosynthesis; CoA from (R)-pantothenate: step 1/5. Its function is as follows. Catalyzes the phosphorylation of pantothenate (Pan), the first step in CoA biosynthesis. In Burkholderia thailandensis (strain ATCC 700388 / DSM 13276 / CCUG 48851 / CIP 106301 / E264), this protein is Type III pantothenate kinase.